The sequence spans 344 residues: Sorting nexin-16 (344 aa).

The segment covering 1–10 (MATPYVPVPM) has biased composition (pro residues). Disordered regions lie at residues 1–49 (MATP…DSSV) and 83–105 (SIEY…NWED). Residues 14-26 (NSASSFTNNRNQR) show a composition bias toward polar residues. Residues 27 to 40 (SSSFGSVSTSSNSS) are compositionally biased toward low complexity. Over residues 88 to 105 (ARPRDTEEQHPDALNWED) the composition is skewed to basic and acidic residues. A PX domain is found at 105 to 218 (DRPSTPTILG…EFLCLDDPPG (114 aa)). 3 residues coordinate a 1,2-diacyl-sn-glycero-3-phospho-(1D-myo-inositol-3-phosphate): Arg-144, Thr-146, and Arg-184. Position 222 is a phosphoserine (Ser-222). The stretch at 223-278 (LEESRAFCETLEETNYHLQRELLEKQKEVESLKKLLGEKQLHIDALETRIRTLSLE) forms a coiled coil.

This sequence belongs to the sorting nexin family. As to quaternary structure, homooligomer. Interacts with EGFR.

It localises to the early endosome membrane. It is found in the late endosome membrane. Its subcellular location is the cytoplasm. The protein localises to the lysosome. May be involved in several stages of intracellular trafficking. Plays a role in protein transport from early to late endosomes. Plays a role in protein transport to the lysosome. Promotes degradation of EGFR after EGF signaling. This chain is Sorting nexin-16 (Snx16), found in Rattus norvegicus (Rat).